A 303-amino-acid polypeptide reads, in one-letter code: Probable WRKY transcription factor 30 (303 aa).

The interval 65–92 is disordered; sequence DQVSQGGGSPKSDDSDQEPLVIKSSKKS. The segment at residues 107–175 is a DNA-binding region (WRKY); the sequence is GVDRTLDDGF…YRGIHSCSQA (69 aa). Low complexity predominate over residues 266–278; it reads SGSASHSASNSPS. The interval 266–291 is disordered; it reads SGSASHSASNSPSTVPLESPFESYDP.

The protein belongs to the WRKY group III family. Interacts with WRKY53, WRKY54 and WRKY70.

Its subcellular location is the nucleus. In terms of biological role, transcription factor. Interacts specifically with the W box (5'-(T)TGAC[CT]-3'), a frequently occurring elicitor-responsive cis-acting element. This Arabidopsis thaliana (Mouse-ear cress) protein is Probable WRKY transcription factor 30.